The primary structure comprises 704 residues: Non-sulfated chondroitin lyase E66 (704 aa).

Residues 1–23 form the signal peptide; sequence MSIVLIIVIVVIFLICFLYLSNS. Catalysis depends on proton acceptor residues Asn236 and His291. Tyr299 serves as the catalytic Proton donor.

It belongs to the baculoviridae E66 family.

It localises to the virion membrane. Its subcellular location is the host nucleus. The protein localises to the host cytoplasm. In terms of biological role, component of the polyhedra envelope. Plays an essential role in oral infectivity. May digest, with its chondroitin lyase activity, the chondroitin sulfate barrier of the peritrophic matrix of the host midgut to facilitate viral infection in the epithelial cells. The sequence is that of Non-sulfated chondroitin lyase E66 (P79) from Lepidoptera (butterflies and moths).